Here is a 193-residue protein sequence, read N- to C-terminus: Intracellular heme transport protein HutX (193 aa).

Tyr-116 is a heme binding site.

As to quaternary structure, homodimer. Interacts with HutZ.

The protein localises to the cytoplasm. Functionally, binds heme. Heme is transferred to the heme-degrading enzyme HutZ via a specific protein-protein interaction. The protein is Intracellular heme transport protein HutX of Vibrio cholerae serotype O1 (strain ATCC 39315 / El Tor Inaba N16961).